A 339-amino-acid chain; its full sequence is MSSSWDIRVTDTSLRDGSHHKRHQFTGDEVRAIVGALDSAGVPVIEVTHGDGLGGSSFNYGFSKVPEQELISIAVDTARNAKIAFLMLPGLGIKDDIIVAQDNGASICRIATHCTEADVSIQHFGLARDRGLETVGFLMMAHSIPPEKLARQARIMADAGCQCVYVVDSAGALVLEQVSDRVEALVQELGADAQVGFHGHENLGLGVANSIAAVRAGAKQIDGSTRRFGAGAGNAPVEAFVGVCDKIGVKTGIDFFAIADAAEDVVRPAMPAECLLDRQALMMGYAGVYSSFLKHAERQAERYGVSSAELLVRAGKRKLVGGQEDQLIDIALELQREHL.

One can recognise a Pyruvate carboxyltransferase domain in the interval 7 to 259 (IRVTDTSLRD…KTGIDFFAIA (253 aa)). Substrate is bound at residue 15–16 (RD). Asp16 contacts Mn(2+). The Proton acceptor role is filled by His19. Ser169 and His198 together coordinate substrate. Positions 198 and 200 each coordinate Mn(2+). Tyr289 is a binding site for substrate.

This sequence belongs to the 4-hydroxy-2-oxovalerate aldolase family.

It carries out the reaction (S)-4-hydroxy-2-oxopentanoate = acetaldehyde + pyruvate. The protein is 4-hydroxy-2-oxovalerate aldolase 3 of Rhodococcus opacus (strain B4).